The primary structure comprises 444 residues: Transposase for insertion sequence element IS1557 (444 aa).

A disordered region spans residues 273–292 (PKWGRGRPGKNAAPRPGRER).

It belongs to the transposase 12 family.

The sequence is that of Transposase for insertion sequence element IS1557 from Mycobacterium tuberculosis (strain CDC 1551 / Oshkosh).